A 186-amino-acid polypeptide reads, in one-letter code: Protein FAM219A (186 aa).

Disordered stretches follow at residues 1 to 47 (MMEE…NYKP) and 59 to 132 (ELAR…GYSS). The segment covering 67-81 (KNGTVGSPVNQQPKK) has biased composition (polar residues). Residues 123–132 (SRYSSSGYSS) show a composition bias toward low complexity.

Belongs to the FAM219 family.

This is Protein FAM219A (fam219a) from Danio rerio (Zebrafish).